Here is a 343-residue protein sequence, read N- to C-terminus: Methionine import ATP-binding protein MetN (343 aa).

Residues 2-241 (IKLSNITKVF…PKTPLAQKFI (240 aa)) enclose the ABC transporter domain. 38–45 (GASGAGKS) contributes to the ATP binding site.

This sequence belongs to the ABC transporter superfamily. Methionine importer (TC 3.A.1.24) family. As to quaternary structure, the complex is composed of two ATP-binding proteins (MetN), two transmembrane proteins (MetI) and a solute-binding protein (MetQ).

It is found in the cell inner membrane. It carries out the reaction L-methionine(out) + ATP + H2O = L-methionine(in) + ADP + phosphate + H(+). The catalysed reaction is D-methionine(out) + ATP + H2O = D-methionine(in) + ADP + phosphate + H(+). In terms of biological role, part of the ABC transporter complex MetNIQ involved in methionine import. Responsible for energy coupling to the transport system. The sequence is that of Methionine import ATP-binding protein MetN from Shigella flexneri serotype 5b (strain 8401).